Reading from the N-terminus, the 187-residue chain is UPF0301 protein YqgE (187 aa).

It belongs to the UPF0301 (AlgH) family.

This chain is UPF0301 protein YqgE, found in Shigella boydii serotype 4 (strain Sb227).